The sequence spans 180 residues: Zein-beta (180 aa).

An N-terminal signal peptide occupies residues 1-19 (MKMVIVLVVWLALSAASAS).

It is found in the vacuole. The protein resides in the aleurone grain. Zeins are major seed storage proteins. The sequence is that of Zein-beta from Zea mays (Maize).